We begin with the raw amino-acid sequence, 340 residues long: Cyclic GMP-AMP synthase-like receptor 3 (340 aa).

ATP contacts are provided by residues serine 62 and 74 to 76 (EAD). Glutamate 74, aspartate 76, and aspartate 177 together coordinate Mg(2+). ATP contacts are provided by residues lysine 241 and 255-259 (SYHLK). 2 residues coordinate Mn(2+): aspartate 267 and aspartate 270.

The protein belongs to the mab-21 family. It depends on Mg(2+) as a cofactor. Requires Mn(2+) as cofactor.

The enzyme catalyses 2 ATP = 3',3'-c-di-AMP + 2 diphosphate. In terms of biological role, nucleotidyltransferase that catalyzes the formation of cyclic di-AMP (3',3'-c-di-AMP) from 2 molecules of ATP and plays a key role in innate immunity. Acts as a key sensor of double-stranded RNA (dsRNA), the presence of dsRNA in the cytoplasm being a danger signal that triggers the immune responses. Directly binds dsRNA, activating the nucleotidyltransferase activity, leading to synthesis of 3',3'-c-di-AMP, a second messenger that binds to and activates Sting, thereby triggering the immune response via activation of the NF-kappa-B transcription factor. In Stylophora pistillata (Smooth cauliflower coral), this protein is Cyclic GMP-AMP synthase-like receptor 3.